The sequence spans 141 residues: Nucleoside diphosphate kinase (141 aa).

Residues Lys-11, Phe-59, Arg-87, Thr-93, Arg-104, and Asn-114 each contribute to the ATP site. The active-site Pros-phosphohistidine intermediate is the His-117.

It belongs to the NDK family. Homotetramer. Requires Mg(2+) as cofactor.

It localises to the cytoplasm. It catalyses the reaction a 2'-deoxyribonucleoside 5'-diphosphate + ATP = a 2'-deoxyribonucleoside 5'-triphosphate + ADP. It carries out the reaction a ribonucleoside 5'-diphosphate + ATP = a ribonucleoside 5'-triphosphate + ADP. Its function is as follows. Major role in the synthesis of nucleoside triphosphates other than ATP. The ATP gamma phosphate is transferred to the NDP beta phosphate via a ping-pong mechanism, using a phosphorylated active-site intermediate. The polypeptide is Nucleoside diphosphate kinase (Halorhodospira halophila (strain DSM 244 / SL1) (Ectothiorhodospira halophila (strain DSM 244 / SL1))).